The sequence spans 311 residues: MQRLNPWHGTCRLQFSADADTTHHQGGCTAPFKLMRAERGNDGRCELPLLHSAGGLVGGDQLSVDLELGRNSRALITSVAAQKVYGSIGRSRLHPKGTWANQSVSCRLGSNSDLEWLPQELVVYADALVEQSLDVQLADDASFLSAEIVRLGRTAAGEDLGQGCWRSAVSLRRIGENGTRWEQVDRLELSGDALHHRHGLNGDAVFGTLIWAAPAPLTNPTLKSLLTNARNDRAGLEGQMQCSRLEQGLIARYVGPSSRDARFWFSRIWARTRAQRQLSEPRIPRVWPLQEQPLRQQVFIENIASSNAATH.

This sequence belongs to the UreD family. UreD, UreF and UreG form a complex that acts as a GTP-hydrolysis-dependent molecular chaperone, activating the urease apoprotein by helping to assemble the nickel containing metallocenter of UreC. The UreE protein probably delivers the nickel.

Its subcellular location is the cytoplasm. Required for maturation of urease via the functional incorporation of the urease nickel metallocenter. The sequence is that of Urease accessory protein UreD from Synechococcus sp. (strain CC9902).